A 352-amino-acid chain; its full sequence is Phosphoribosylformylglycinamidine cyclo-ligase (352 aa).

The protein belongs to the AIR synthase family.

It is found in the cytoplasm. It carries out the reaction 2-formamido-N(1)-(5-O-phospho-beta-D-ribosyl)acetamidine + ATP = 5-amino-1-(5-phospho-beta-D-ribosyl)imidazole + ADP + phosphate + H(+). It participates in purine metabolism; IMP biosynthesis via de novo pathway; 5-amino-1-(5-phospho-D-ribosyl)imidazole from N(2)-formyl-N(1)-(5-phospho-D-ribosyl)glycinamide: step 2/2. This is Phosphoribosylformylglycinamidine cyclo-ligase from Teredinibacter turnerae (strain ATCC 39867 / T7901).